Reading from the N-terminus, the 343-residue chain is MIKLSNITKVFHQGTRTIQALNNVSRHVPAGQIYGVIGASGAGKSTLIRCVNLLERPTEGSVLVDGQELTTLSESELTKARRQIGMIFQHFNLLSSRTVFGNVALPLELDNTPKDEIKRRVTELLSLVGLGDKHDSYPSNLSGGQKQRVAIARALASNPKVLLCDEATSALDPATTRSILELLKDINRRLGLTILLITHEMDVVKRICDCVAVISNGELIEQDTVSEVFSHPKTPLAQKFIQSTLHLDIPEDYQERLQTEPFTDCVPMLRLEFTGQSVDAPLLSETARRFNVNNNIISAQMDYAGGVKFGIMLTEMHGTQQDTQAAIAWLQEHHVKVEVLGYV.

In terms of domain architecture, ABC transporter spans 2-241 (IKLSNITKVF…PKTPLAQKFI (240 aa)). Residue 38–45 (GASGAGKS) coordinates ATP.

It belongs to the ABC transporter superfamily. Methionine importer (TC 3.A.1.24) family. As to quaternary structure, the complex is composed of two ATP-binding proteins (MetN), two transmembrane proteins (MetI) and a solute-binding protein (MetQ).

The protein resides in the cell inner membrane. It carries out the reaction L-methionine(out) + ATP + H2O = L-methionine(in) + ADP + phosphate + H(+). It catalyses the reaction D-methionine(out) + ATP + H2O = D-methionine(in) + ADP + phosphate + H(+). Its function is as follows. Part of the ABC transporter complex MetNIQ involved in methionine import. Responsible for energy coupling to the transport system. This is Methionine import ATP-binding protein MetN from Shigella flexneri serotype 5b (strain 8401).